Reading from the N-terminus, the 306-residue chain is 4-diphosphocytidyl-2-C-methyl-D-erythritol kinase (306 aa).

Lys-23 is a catalytic residue. 108–118 (PIAAGIGGGSA) contributes to the ATP binding site. The active site involves Asp-150.

Belongs to the GHMP kinase family. IspE subfamily.

The catalysed reaction is 4-CDP-2-C-methyl-D-erythritol + ATP = 4-CDP-2-C-methyl-D-erythritol 2-phosphate + ADP + H(+). It participates in isoprenoid biosynthesis; isopentenyl diphosphate biosynthesis via DXP pathway; isopentenyl diphosphate from 1-deoxy-D-xylulose 5-phosphate: step 3/6. Catalyzes the phosphorylation of the position 2 hydroxy group of 4-diphosphocytidyl-2C-methyl-D-erythritol. The chain is 4-diphosphocytidyl-2-C-methyl-D-erythritol kinase from Rhodopseudomonas palustris (strain BisB18).